We begin with the raw amino-acid sequence, 375 residues long: Chaperone protein DnaJ (375 aa).

The region spanning 5–70 is the J domain; the sequence is DYYEVLGVAR…NKRRAYDAHG (66 aa). The CR-type zinc finger occupies 131 to 208; it reads GIERRIEIPT…CHGAGRVEED (78 aa). Positions 144, 147, 160, 163, 182, 185, 196, and 199 each coordinate Zn(2+). CXXCXGXG motif repeat units follow at residues 144–151, 160–167, 182–189, and 196–203; these read CAPCHGSG, CGTCHGRG, CPHCDGRG, and CKTCHGAG.

It belongs to the DnaJ family. Homodimer. It depends on Zn(2+) as a cofactor.

It is found in the cytoplasm. Functionally, participates actively in the response to hyperosmotic and heat shock by preventing the aggregation of stress-denatured proteins and by disaggregating proteins, also in an autonomous, DnaK-independent fashion. Unfolded proteins bind initially to DnaJ; upon interaction with the DnaJ-bound protein, DnaK hydrolyzes its bound ATP, resulting in the formation of a stable complex. GrpE releases ADP from DnaK; ATP binding to DnaK triggers the release of the substrate protein, thus completing the reaction cycle. Several rounds of ATP-dependent interactions between DnaJ, DnaK and GrpE are required for fully efficient folding. Also involved, together with DnaK and GrpE, in the DNA replication of plasmids through activation of initiation proteins. This chain is Chaperone protein DnaJ, found in Xanthomonas euvesicatoria pv. vesicatoria (strain 85-10) (Xanthomonas campestris pv. vesicatoria).